The chain runs to 684 residues: Glycine--tRNA ligase beta subunit (684 aa).

The protein belongs to the class-II aminoacyl-tRNA synthetase family. As to quaternary structure, tetramer of two alpha and two beta subunits.

It is found in the cytoplasm. It catalyses the reaction tRNA(Gly) + glycine + ATP = glycyl-tRNA(Gly) + AMP + diphosphate. In Pseudomonas aeruginosa (strain LESB58), this protein is Glycine--tRNA ligase beta subunit.